Here is a 376-residue protein sequence, read N- to C-terminus: Alpha-2,8-sialyltransferase 8E (376 aa).

Over 1-17 the chain is Cytoplasmic; the sequence is MRYADPSANRDLLGNRT. The helical; Signal-anchor for type II membrane protein transmembrane segment at 18–38 threads the bilayer; sequence LLFIFICAFALVTLLQQILYG. Residues 39 to 376 lie on the Lumenal side of the membrane; that stretch reads RNYIKRYFEF…RVHTGTCSCC (338 aa). N-linked (GlcNAc...) asparagine glycosylation is found at asparagine 56 and asparagine 96. 2 cysteine pairs are disulfide-bonded: cysteine 164–cysteine 313 and cysteine 178–cysteine 373. Substrate is bound by residues asparagine 192 and 214–216; that span reads NPS. N-linked (GlcNAc...) asparagine glycosylation is found at asparagine 241 and asparagine 284. 300–302 is a substrate binding site; the sequence is STG. Histidine 348 serves as the catalytic Proton donor/acceptor.

It belongs to the glycosyltransferase 29 family.

The protein resides in the golgi apparatus membrane. The enzyme catalyses a ganglioside GQ1c (d18:1(4E)) + CMP-N-acetyl-beta-neuraminate = a ganglioside GP1c (d18:1(4E)) + CMP + H(+). It participates in protein modification; protein glycosylation. In terms of biological role, involved in the synthesis of gangliosides GD1c, GT1a, GQ1b, GP1c and GT3 from GD1a, GT1b, GM1b and GD3 respectively. The polypeptide is Alpha-2,8-sialyltransferase 8E (ST8SIA5) (Pan troglodytes (Chimpanzee)).